The primary structure comprises 375 residues: MAKRDYYEVLGVSRDVDGKEVKKAYRRLAMKYHPDRNPGDASAEEMFKEATEAYDVLSDDQKRAAYDQFGHAGVDGNAGAGGFGGGASFSDIFGDVFGDIFGGGGGGRTRANRGSDLRYTLDLDLEEAVRGTTVKIRVPSQVECKSCSGSGAEKGTQPETCGTCNGAGQVRMQQGFFSIQQTCPRCRGAGKIVRNPCRSCHGSGYVEEQKTLSVKVPAGVDTGDRIRLSGEGEPGVNGGPPGDLYVQVAVREHKIFTRDGRNLYCEVPISFVDAALGGELEVPTLDGRVKLKIPEETQTGRLFRLRGKGVTPVRGGAPGDLLCRVVVETPVNLTKKQKDLLREFQTSMEESGGQQAPKKHSWFEGVKSFFDDMKF.

In terms of domain architecture, J spans 5–70; sequence DYYEVLGVSR…QKRAAYDQFG (66 aa). Residues 131–209 form a CR-type zinc finger; that stretch reads GTTVKIRVPS…CHGSGYVEEQ (79 aa). 8 residues coordinate Zn(2+): cysteine 144, cysteine 147, cysteine 161, cysteine 164, cysteine 183, cysteine 186, cysteine 197, and cysteine 200. 4 CXXCXGXG motif repeats span residues 144 to 151, 161 to 168, 183 to 190, and 197 to 204; these read CKSCSGSG, CGTCNGAG, CPRCRGAG, and CRSCHGSG.

The protein belongs to the DnaJ family. As to quaternary structure, homodimer. Requires Zn(2+) as cofactor.

The protein localises to the cytoplasm. Participates actively in the response to hyperosmotic and heat shock by preventing the aggregation of stress-denatured proteins and by disaggregating proteins, also in an autonomous, DnaK-independent fashion. Unfolded proteins bind initially to DnaJ; upon interaction with the DnaJ-bound protein, DnaK hydrolyzes its bound ATP, resulting in the formation of a stable complex. GrpE releases ADP from DnaK; ATP binding to DnaK triggers the release of the substrate protein, thus completing the reaction cycle. Several rounds of ATP-dependent interactions between DnaJ, DnaK and GrpE are required for fully efficient folding. Also involved, together with DnaK and GrpE, in the DNA replication of plasmids through activation of initiation proteins. The sequence is that of Chaperone protein DnaJ from Hahella chejuensis (strain KCTC 2396).